A 443-amino-acid polypeptide reads, in one-letter code: Minovincinine 19-hydroxy-O-acetyltransferase (443 aa).

Histidine 157 serves as the catalytic Proton acceptor. The short motif at 215–222 is the Nuclear localization signal element; the sequence is RKRFLFSP. A coiled-coil region spans residues 316–343; the sequence is TKLVIGELRKAKDKLKNLSQEKLNYVAR. Aspartate 384 functions as the Proton acceptor in the catalytic mechanism.

It belongs to the plant acyltransferase family. Monomer. Expressed in cortical cells of the root tip, especially in hairy roots, as well as in etiolated seedlings. Mostly expressed in roots, and, at lower levels, in leaves.

Its subcellular location is the cytoplasm. It localises to the nucleus. The enzyme catalyses (+)-minovincinine + acetyl-CoA = (+)-echitovenine + CoA. It functions in the pathway alkaloid biosynthesis. Functionally, component of the monoterpenoid indole alkaloids (MIAs, e.g. echitovenine, tabersonine, lochnericine, 19-hydroxytabersonine and horhammericine) biosynthetic pathway; MIAs are used in cancer treatment and other medical applications. Acyltransferase catalyzing the conversion of (+)-minovincinine to (+)-echitovenine. The sequence is that of Minovincinine 19-hydroxy-O-acetyltransferase from Catharanthus roseus (Madagascar periwinkle).